The chain runs to 270 residues: MRIALGVQYDGAAFCGWQAQPHGKTVQDALERALGEFACVPLHTTVAGRTDTGVHGLGQVVHFDTDLDRTDFSWVRGTNAFLPSTVSVQWAKPMPETFHARFAAFERTYYYVLYVHPVRSPMLAGRAGWIHTPLDDDAMRAAAAHLIGEHDFSSFRSSECQSKTPVKHLYQIDVRRSGHFIHFRFRANAFLHHMVRNLMGCLVAVGRGRYPADWLADVLAGRDRTLAAPTFMADGLYLAHVGYPAEFAVPPAQLGSVPWSSVWADLDLPS.

The active-site Nucleophile is Asp-51. Tyr-109 is a substrate binding site.

The protein belongs to the tRNA pseudouridine synthase TruA family. Homodimer.

The catalysed reaction is uridine(38/39/40) in tRNA = pseudouridine(38/39/40) in tRNA. Functionally, formation of pseudouridine at positions 38, 39 and 40 in the anticodon stem and loop of transfer RNAs. The protein is tRNA pseudouridine synthase A of Burkholderia ambifaria (strain ATCC BAA-244 / DSM 16087 / CCUG 44356 / LMG 19182 / AMMD) (Burkholderia cepacia (strain AMMD)).